We begin with the raw amino-acid sequence, 445 residues long: MKIFGTDGVRGKAGVKLTPMFVMRLGVAAGLYFKKHSKTNKILIGKDTRKSGYMVENALVSALTSIGYNVIQIGPMPTPAIAFLTEDMRCDAGIMISASHNPFEDNGIKFFNSYGYKLKEEEERAIEEIFHDERLLHSSYKVGESIGSAKRIDDVIGRYIVHLKHSFPKHLNLQSLRIVLDTANGAAYKVAPVVFSELGADVLVINDEPNGCNINEQCGALHPNQLSQEVKKYRADLGFAFDGDADRLVVVDNLGNIVHGDKLLGVLGVYQKSKNALSSQAIVATSMSNLALKEYLKSQDLELKHCAIGDKFVSECMRLNKANFGGEQSGHIIFSDYAKTGDGLVCALQVSALVLESKQVSSVALNPFELYPQNLVNLNVQKKPPLESLKGYSALLKELDQLEIRHLIRYSGTENKLRILLEAKDEKLLESKMQELKEFFEGHLC.

The active-site Phosphoserine intermediate is Ser99. 4 residues coordinate Mg(2+): Ser99, Asp242, Asp244, and Asp246. The residue at position 99 (Ser99) is a Phosphoserine.

It belongs to the phosphohexose mutase family. Requires Mg(2+) as cofactor. Post-translationally, activated by phosphorylation.

It catalyses the reaction alpha-D-glucosamine 1-phosphate = D-glucosamine 6-phosphate. Catalyzes the conversion of glucosamine-6-phosphate to glucosamine-1-phosphate. The sequence is that of Phosphoglucosamine mutase from Helicobacter pylori (strain P12).